A 191-amino-acid polypeptide reads, in one-letter code: Cell division protein SepF (191 aa).

Positions 156–167 are enriched in polar residues; it reads EEASPSNMSNKG. A disordered region spans residues 156–191; the sequence is EEASPSNMSNKGNDLISKETSPAPEPAWGETVATAL.

The protein belongs to the SepF family. In terms of assembly, homodimer. Interacts with FtsZ.

It localises to the cytoplasm. In terms of biological role, cell division protein that is part of the divisome complex and is recruited early to the Z-ring. Probably stimulates Z-ring formation, perhaps through the cross-linking of FtsZ protofilaments. Its function overlaps with FtsA. This is Cell division protein SepF from Prochlorococcus marinus (strain NATL2A).